The chain runs to 79 residues: Acyl carrier protein (79 aa).

A Carrier domain is found at 1–76 (MEVFEEVRDV…DVVTYIENLN (76 aa)). Residue S36 is modified to O-(pantetheine 4'-phosphoryl)serine.

This sequence belongs to the acyl carrier protein (ACP) family. In terms of processing, 4'-phosphopantetheine is transferred from CoA to a specific serine of apo-ACP by AcpS. This modification is essential for activity because fatty acids are bound in thioester linkage to the sulfhydryl of the prosthetic group.

The protein localises to the cytoplasm. The protein operates within lipid metabolism; fatty acid biosynthesis. Functionally, carrier of the growing fatty acid chain in fatty acid biosynthesis. The polypeptide is Acyl carrier protein (Campylobacter hominis (strain ATCC BAA-381 / DSM 21671 / CCUG 45161 / LMG 19568 / NCTC 13146 / CH001A)).